The following is a 200-amino-acid chain: Probable nicotinate-nucleotide adenylyltransferase (200 aa).

Belongs to the NadD family.

The catalysed reaction is nicotinate beta-D-ribonucleotide + ATP + H(+) = deamido-NAD(+) + diphosphate. Its pathway is cofactor biosynthesis; NAD(+) biosynthesis; deamido-NAD(+) from nicotinate D-ribonucleotide: step 1/1. Catalyzes the reversible adenylation of nicotinate mononucleotide (NaMN) to nicotinic acid adenine dinucleotide (NaAD). In Clostridium novyi (strain NT), this protein is Probable nicotinate-nucleotide adenylyltransferase.